We begin with the raw amino-acid sequence, 272 residues long: ATP synthase subunit a (272 aa).

The next 5 membrane-spanning stretches (helical) occupy residues 41-61, 102-122, 147-167, 212-232, and 243-263; these read TLNIDSMFFSVVLGLIFLALF, IAPLALTIFVWVFLMNLMDLV, DVNITLSMALGVFILILFYSI, LFGNMYAGELIFILIAGLLPW, and AIFHILIITLQAFIFMVLTIV.

Belongs to the ATPase A chain family. In terms of assembly, F-type ATPases have 2 components, CF(1) - the catalytic core - and CF(0) - the membrane proton channel. CF(1) has five subunits: alpha(3), beta(3), gamma(1), delta(1), epsilon(1). CF(0) has three main subunits: a(1), b(2) and c(9-12). The alpha and beta chains form an alternating ring which encloses part of the gamma chain. CF(1) is attached to CF(0) by a central stalk formed by the gamma and epsilon chains, while a peripheral stalk is formed by the delta and b chains.

It is found in the cell inner membrane. Its function is as follows. Key component of the proton channel; it plays a direct role in the translocation of protons across the membrane. The sequence is that of ATP synthase subunit a from Edwardsiella ictaluri (strain 93-146).